The primary structure comprises 370 residues: Chorismate synthase (370 aa).

Residues Arg48 and Arg54 each coordinate NADP(+). Residues 130–132, 242–243, Gly287, 302–306, and Arg328 each bind FMN; these read RSS, NA, and KPTSS.

Belongs to the chorismate synthase family. In terms of assembly, homotetramer. FMNH2 is required as a cofactor.

The enzyme catalyses 5-O-(1-carboxyvinyl)-3-phosphoshikimate = chorismate + phosphate. It participates in metabolic intermediate biosynthesis; chorismate biosynthesis; chorismate from D-erythrose 4-phosphate and phosphoenolpyruvate: step 7/7. Its function is as follows. Catalyzes the anti-1,4-elimination of the C-3 phosphate and the C-6 proR hydrogen from 5-enolpyruvylshikimate-3-phosphate (EPSP) to yield chorismate, which is the branch point compound that serves as the starting substrate for the three terminal pathways of aromatic amino acid biosynthesis. This reaction introduces a second double bond into the aromatic ring system. In Xanthobacter autotrophicus (strain ATCC BAA-1158 / Py2), this protein is Chorismate synthase.